Consider the following 101-residue polypeptide: uncharacterized protein (101 aa).

2 helical membrane passes run 3–23 (IVYE…LFLF) and 39–59 (AFLS…LIFF).

The protein resides in the membrane. This is an uncharacterized protein from Saccharomyces cerevisiae (strain ATCC 204508 / S288c) (Baker's yeast).